A 327-amino-acid chain; its full sequence is Porphobilinogen deaminase (327 aa).

C251 carries the post-translational modification S-(dipyrrolylmethanemethyl)cysteine.

The protein belongs to the HMBS family. Dipyrromethane serves as cofactor.

The catalysed reaction is 4 porphobilinogen + H2O = hydroxymethylbilane + 4 NH4(+). It participates in porphyrin-containing compound metabolism; protoporphyrin-IX biosynthesis; coproporphyrinogen-III from 5-aminolevulinate: step 2/4. In terms of biological role, catalyzes the tetrapolymerization of the monopyrrole porphobilinogen (PBG) into the hydroxymethylbilane pre-uroporphyrinogen in several discrete steps. In Saccharomyces cerevisiae (strain ATCC 204508 / S288c) (Baker's yeast), this protein is Porphobilinogen deaminase (HEM3).